The sequence spans 761 residues: 5-methyltetrahydropteroyltriglutamate--homocysteine methyltransferase (761 aa).

5-methyltetrahydropteroyltri-L-glutamate contacts are provided by residues 16–19 and Lys-118; that span reads RELK. L-homocysteine-binding positions include 436-438 and Glu-489; that span reads IGS. L-methionine-binding positions include 436-438 and Glu-489; that span reads IGS. 5-methyltetrahydropteroyltri-L-glutamate is bound by residues 520 to 521 and Trp-566; that span reads RC. Asp-604 serves as a coordination point for L-homocysteine. Asp-604 lines the L-methionine pocket. Position 610 (Glu-610) interacts with 5-methyltetrahydropteroyltri-L-glutamate. Zn(2+) is bound by residues His-646, Cys-648, and Glu-670. His-699 (proton donor) is an active-site residue. Cys-731 serves as a coordination point for Zn(2+).

It belongs to the vitamin-B12 independent methionine synthase family. The cofactor is Zn(2+).

It catalyses the reaction 5-methyltetrahydropteroyltri-L-glutamate + L-homocysteine = tetrahydropteroyltri-L-glutamate + L-methionine. It participates in amino-acid biosynthesis; L-methionine biosynthesis via de novo pathway; L-methionine from L-homocysteine (MetE route): step 1/1. Its function is as follows. Catalyzes the transfer of a methyl group from 5-methyltetrahydrofolate to homocysteine resulting in methionine formation. This chain is 5-methyltetrahydropteroyltriglutamate--homocysteine methyltransferase, found in Vibrio cholerae serotype O1 (strain ATCC 39315 / El Tor Inaba N16961).